The primary structure comprises 266 residues: Orotidine 5'-phosphate decarboxylase (266 aa).

Substrate is bound by residues Asp37, 59 to 61 (KTH), 91 to 100 (DRKFADIGNT), Tyr217, and Arg235. Catalysis depends on Lys93, which acts as the Proton donor.

This sequence belongs to the OMP decarboxylase family.

It catalyses the reaction orotidine 5'-phosphate + H(+) = UMP + CO2. The protein operates within pyrimidine metabolism; UMP biosynthesis via de novo pathway; UMP from orotate: step 2/2. This is Orotidine 5'-phosphate decarboxylase (URA3) from Cyberlindnera jadinii (Torula yeast).